The chain runs to 340 residues: Ferredoxin--NADP reductase (340 aa).

FAD is bound by residues Asp33, Gln41, Tyr46, Ala86, Phe120, Asp286, and Thr327.

This sequence belongs to the ferredoxin--NADP reductase type 2 family. Homodimer. FAD serves as cofactor.

The enzyme catalyses 2 reduced [2Fe-2S]-[ferredoxin] + NADP(+) + H(+) = 2 oxidized [2Fe-2S]-[ferredoxin] + NADPH. The polypeptide is Ferredoxin--NADP reductase (Rickettsia rickettsii (strain Iowa)).